Consider the following 219-residue polypeptide: Polysialic acid transport ATP-binding protein KpsT (219 aa).

An ABC transporter domain is found at 2-218 (IKIENLTKSY…TEAIADYKKD (217 aa)). An ATP-binding site is contributed by 38-45 (GQNGAGKS).

It belongs to the ABC transporter superfamily.

The protein resides in the cell inner membrane. Its function is as follows. Putative ATP-binding protein, and an energy coupling component for the transport of polysialic acid across the cytoplasmic membrane. The protein is Polysialic acid transport ATP-binding protein KpsT (kpsT) of Escherichia coli.